Consider the following 328-residue polypeptide: Carbonic anhydrase-related protein 11 (328 aa).

Positions 1–23 (MGAAPRLSAPRVLVLWAALGAAA) are cleaved as a signal peptide. In terms of domain architecture, Alpha-carbonic anhydrase spans 33-303 (DWWSYKDNLQ…LAHRALRGNR (271 aa)). Asparagine 118 carries N-linked (GlcNAc...) asparagine glycosylation. A disordered region spans residues 300 to 328 (RGNRDPRHPERRCRGPNYRLHVDDVPHGL). Residues 319–328 (LHVDDVPHGL) show a composition bias toward basic and acidic residues.

The protein belongs to the alpha-carbonic anhydrase family.

The protein resides in the secreted. In terms of biological role, does not have a catalytic activity. This Ovis aries (Sheep) protein is Carbonic anhydrase-related protein 11 (CA11).